Consider the following 354-residue polypeptide: Uroporphyrinogen decarboxylase (354 aa).

Substrate-binding positions include 27 to 31 (RQAGR), aspartate 77, tyrosine 154, serine 209, and histidine 327.

This sequence belongs to the uroporphyrinogen decarboxylase family. As to quaternary structure, homodimer.

It localises to the cytoplasm. The catalysed reaction is uroporphyrinogen III + 4 H(+) = coproporphyrinogen III + 4 CO2. It functions in the pathway porphyrin-containing compound metabolism; protoporphyrin-IX biosynthesis; coproporphyrinogen-III from 5-aminolevulinate: step 4/4. Its function is as follows. Catalyzes the decarboxylation of four acetate groups of uroporphyrinogen-III to yield coproporphyrinogen-III. This Shewanella baltica (strain OS223) protein is Uroporphyrinogen decarboxylase.